Reading from the N-terminus, the 251-residue chain is 1-(5-phosphoribosyl)-5-[(5-phosphoribosylamino)methylideneamino] imidazole-4-carboxamide isomerase (251 aa).

Asp8 functions as the Proton acceptor in the catalytic mechanism. The Proton donor role is filled by Asp131.

This sequence belongs to the HisA/HisF family.

Its subcellular location is the cytoplasm. The enzyme catalyses 1-(5-phospho-beta-D-ribosyl)-5-[(5-phospho-beta-D-ribosylamino)methylideneamino]imidazole-4-carboxamide = 5-[(5-phospho-1-deoxy-D-ribulos-1-ylimino)methylamino]-1-(5-phospho-beta-D-ribosyl)imidazole-4-carboxamide. The protein operates within amino-acid biosynthesis; L-histidine biosynthesis; L-histidine from 5-phospho-alpha-D-ribose 1-diphosphate: step 4/9. In Burkholderia vietnamiensis (strain G4 / LMG 22486) (Burkholderia cepacia (strain R1808)), this protein is 1-(5-phosphoribosyl)-5-[(5-phosphoribosylamino)methylideneamino] imidazole-4-carboxamide isomerase.